The chain runs to 296 residues: Myozenin-1 (296 aa).

At Ser-82 the chain carries Phosphoserine. Gly residues-rich tracts occupy residues 105-117 and 134-170; these read FSYGKGSSGGQAG and SGFGAGGSGGPGGQAGGGGAPGTVGLGEPGSGDQAGG. Residues 105 to 172 form a disordered region; that stretch reads FSYGKGSSGG…GSGDQAGGDG (68 aa).

The protein belongs to the myozenin family. Interacts with ACTN2, ACTN3, FLNA, FLNB, FLNC, LDB3, PPP3CA and TCAP. Interacts via its C-terminal region with MYOT. In terms of tissue distribution, expressed primarily in skeletal muscle and specifically enriched in the gastrocnemius, which is composed predominantly of fast-twitch muscle fibers. Detected at lower levels in heart.

The protein localises to the nucleus. It is found in the cell projection. It localises to the pseudopodium. Myozenins may serve as intracellular binding proteins involved in linking Z-disk proteins such as alpha-actinin, gamma-filamin, TCAP/telethonin, LDB3/ZASP and localizing calcineurin signaling to the sarcomere. Plays an important role in the modulation of calcineurin signaling. May play a role in myofibrillogenesis. The sequence is that of Myozenin-1 from Mus musculus (Mouse).